The primary structure comprises 184 residues: NADH-quinone oxidoreductase subunit B (184 aa).

[4Fe-4S] cluster contacts are provided by Cys37, Cys38, Cys103, and Cys132.

The protein belongs to the complex I 20 kDa subunit family. In terms of assembly, NDH-1 is composed of 14 different subunits. Subunits NuoB, C, D, E, F, and G constitute the peripheral sector of the complex. [4Fe-4S] cluster is required as a cofactor.

It localises to the cell membrane. The enzyme catalyses a quinone + NADH + 5 H(+)(in) = a quinol + NAD(+) + 4 H(+)(out). Its function is as follows. NDH-1 shuttles electrons from NADH, via FMN and iron-sulfur (Fe-S) centers, to quinones in the respiratory chain. The immediate electron acceptor for the enzyme in this species is believed to be a menaquinone. Couples the redox reaction to proton translocation (for every two electrons transferred, four hydrogen ions are translocated across the cytoplasmic membrane), and thus conserves the redox energy in a proton gradient. The sequence is that of NADH-quinone oxidoreductase subunit B from Rhodococcus opacus (strain B4).